The sequence spans 198 residues: Nuclear transcription factor Y subunit A-4 (198 aa).

The segment at 1–47 (MTSSVHELSDNNESHAKKERPDSQTRPQVPSGRSSESIDTNSVYSEP) is disordered. Residues 7-23 (ELSDNNESHAKKERPDS) are compositionally biased toward basic and acidic residues. Positions 24–44 (QTRPQVPSGRSSESIDTNSVY) are enriched in polar residues. A Subunit association domain (SAD) motif is present at residues 101-124 (FVNAKQYHGILRRRQSRAKLEARN). The NFYA/HAP2-type DNA-binding region spans 131–156 (KPYMHESRHLHAIRRPRGCGGRFLNA). Residues 136 to 198 (ESRHLHAIRR…MATSGPNGRS (63 aa)) are disordered. A compositionally biased stretch (basic and acidic residues) spans 156–166 (AKKENGDHKEE).

It belongs to the NFYA/HAP2 subunit family. As to quaternary structure, heterotrimeric transcription factor composed of three components, NF-YA, NF-YB and NF-YC. NF-YB and NF-YC must interact and dimerize for NF-YA association and DNA binding. As to expression, expressed in stems, caulines, and senescent flowers.

It localises to the nucleus. Its function is as follows. Stimulates the transcription of various genes by recognizing and binding to a CCAAT motif in promoters. This Arabidopsis thaliana (Mouse-ear cress) protein is Nuclear transcription factor Y subunit A-4 (NFYA4).